An 815-amino-acid polypeptide reads, in one-letter code: Chromatin assembly factor 1 subunit FAS1 (815 aa).

Disordered stretches follow at residues 1 to 39 (MDEV…TSEE), 292 to 330 (NNKE…KKQL), 434 to 477 (KLST…KKSR), 502 to 577 (QVVK…EGVQ), and 791 to 815 (RCLP…NENA). 2 stretches are compositionally biased toward basic and acidic residues: residues 10 to 21 (NENRKTMIEPKK) and 292 to 328 (NNKE…ELKK). The stretch at 244–336 (EEKLLLKQLE…KKQLQVQKQA (93 aa)) forms a coiled coil. Composition is skewed to acidic residues over residues 516 to 532 (LDYE…EEAG) and 554 to 576 (DDED…DEGV). The span at 806 to 815 (AAERLENENA) shows a compositional bias: basic and acidic residues.

This sequence belongs to the CHAF1A family. Component of the chromatin assembly factor 1 (CAF-1) complex, composed of FAS1, FAS2 and MSI1. Interacts with CYP71. As to expression, expressed in the shoot apical meristem, young leaf primordia, root tip and first lateral root primordium at the hypocotyl/root junction.

It is found in the nucleus. Component of the chromatin assembly factor complex (CAF-1) involved in chromatin assembly following DNA replication and DNA repair. Assembles histone octamers onto replicating DNA in vitro. Required for several aspects of development, including seedling growth and leaf hair differentiation. Plays a critical role in the organization of shoot apical meristem (SAM) and root apical meristem (RAM) during postembryonic development by facilitating stable maintenance of gene expression states. Seems not required to maintain transcriptional repression of heterochromatic genes. Involved in heterologous recombination. May repress endocycle. The sequence is that of Chromatin assembly factor 1 subunit FAS1 (FAS1) from Arabidopsis thaliana (Mouse-ear cress).